A 405-amino-acid polypeptide reads, in one-letter code: 4-hydroxy-3-methylbut-2-en-1-yl diphosphate synthase (flavodoxin) (405 aa).

Residues Cys-297, Cys-300, Cys-343, and Glu-350 each contribute to the [4Fe-4S] cluster site.

This sequence belongs to the IspG family. [4Fe-4S] cluster serves as cofactor.

The catalysed reaction is (2E)-4-hydroxy-3-methylbut-2-enyl diphosphate + oxidized [flavodoxin] + H2O + 2 H(+) = 2-C-methyl-D-erythritol 2,4-cyclic diphosphate + reduced [flavodoxin]. Its pathway is isoprenoid biosynthesis; isopentenyl diphosphate biosynthesis via DXP pathway; isopentenyl diphosphate from 1-deoxy-D-xylulose 5-phosphate: step 5/6. Its function is as follows. Converts 2C-methyl-D-erythritol 2,4-cyclodiphosphate (ME-2,4cPP) into 1-hydroxy-2-methyl-2-(E)-butenyl 4-diphosphate. This Francisella tularensis subsp. mediasiatica (strain FSC147) protein is 4-hydroxy-3-methylbut-2-en-1-yl diphosphate synthase (flavodoxin).